We begin with the raw amino-acid sequence, 542 residues long: MAKQIVYGDEARAKMKAGIEKVAKAVSVTLGPKGRSVVLEKKFGSPLIIDDGVTIAKDIELEDKFENMGAQLIREVASKTNDIAGDGTTTATVLTHAILTEGIKNITAGANPTLVKKGIEMAVETVKEELKKMQRPVETKEEKAQIATISANDRMVGELIAEAMEKVGHEGVITVEEGKTATTELQVVEGMQFDRGYISPYFVTDSERMECVLEDCQIILADKKVSSMNELLPLLEGIVKNGRNFLIIAEDVDGEALATLVVNRLRGTLKGCAVKAPGFGDRRKEMLEDIAILTGGQVIAEERGMKLETATLDMLGSAKRVVIDKENATIVSGEGDKKKIEARAEQIRKQIENSTSDYDKEKLQERLAKLSGGVAVISVGAATETEMKAKKAKVEDAKNATKAGVEEGLIPGGGVALTRCEGAVGKLKADNEDVQTGINIVKKALTAPLYQIAFNAGLDGSVVVENVRNAKGNQGFDADTGEYVDMIKAGVVDAVKVVRIGLENAASIAATVLLTEALVADIPEEKGAAPMGHPGMGGMGMM.

ATP is bound by residues 29 to 32 (TLGP), 86 to 90 (DGTTT), glycine 413, and aspartate 493.

It belongs to the chaperonin (HSP60) family. Forms a cylinder of 14 subunits composed of two heptameric rings stacked back-to-back. Interacts with the co-chaperonin GroES.

The protein resides in the cytoplasm. It catalyses the reaction ATP + H2O + a folded polypeptide = ADP + phosphate + an unfolded polypeptide.. Its function is as follows. Together with its co-chaperonin GroES, plays an essential role in assisting protein folding. The GroEL-GroES system forms a nano-cage that allows encapsulation of the non-native substrate proteins and provides a physical environment optimized to promote and accelerate protein folding. This chain is Chaperonin GroEL, found in Elusimicrobium minutum (strain Pei191).